A 135-amino-acid polypeptide reads, in one-letter code: Large ribosomal subunit protein uL18 (135 aa).

The interval 1–25 (MAQTENQKSKRIPLGKDVSTQRRLS) is disordered.

It belongs to the universal ribosomal protein uL18 family. In terms of assembly, part of the 50S ribosomal subunit; part of the 5S rRNA/L5/L18/L25 subcomplex. Contacts the 5S and 23S rRNAs.

This is one of the proteins that bind and probably mediate the attachment of the 5S RNA into the large ribosomal subunit, where it forms part of the central protuberance. The polypeptide is Large ribosomal subunit protein uL18 (Nocardia farcinica (strain IFM 10152)).